Reading from the N-terminus, the 494-residue chain is Aspartyl/glutamyl-tRNA(Asn/Gln) amidotransferase subunit B (494 aa).

This sequence belongs to the GatB/GatE family. GatB subfamily. In terms of assembly, heterotrimer of A, B and C subunits.

The enzyme catalyses L-glutamyl-tRNA(Gln) + L-glutamine + ATP + H2O = L-glutaminyl-tRNA(Gln) + L-glutamate + ADP + phosphate + H(+). It catalyses the reaction L-aspartyl-tRNA(Asn) + L-glutamine + ATP + H2O = L-asparaginyl-tRNA(Asn) + L-glutamate + ADP + phosphate + 2 H(+). Functionally, allows the formation of correctly charged Asn-tRNA(Asn) or Gln-tRNA(Gln) through the transamidation of misacylated Asp-tRNA(Asn) or Glu-tRNA(Gln) in organisms which lack either or both of asparaginyl-tRNA or glutaminyl-tRNA synthetases. The reaction takes place in the presence of glutamine and ATP through an activated phospho-Asp-tRNA(Asn) or phospho-Glu-tRNA(Gln). The polypeptide is Aspartyl/glutamyl-tRNA(Asn/Gln) amidotransferase subunit B (Protochlamydia amoebophila (strain UWE25)).